A 525-amino-acid chain; its full sequence is GMP synthase [glutamine-hydrolyzing] (525 aa).

Residues 9–207 form the Glutamine amidotransferase type-1 domain; it reads RILILDFGSQ…VRDICQCEAL (199 aa). The active-site Nucleophile is the Cys-86. Catalysis depends on residues His-181 and Glu-183. Residues 208-400 form the GMPS ATP-PPase domain; that stretch reads WTPAKIIDDA…LGLPYDMLYR (193 aa). 235–241 serves as a coordination point for ATP; it reads SGGVDSS.

As to quaternary structure, homodimer.

The catalysed reaction is XMP + L-glutamine + ATP + H2O = GMP + L-glutamate + AMP + diphosphate + 2 H(+). It participates in purine metabolism; GMP biosynthesis; GMP from XMP (L-Gln route): step 1/1. Its function is as follows. Catalyzes the synthesis of GMP from XMP. The chain is GMP synthase [glutamine-hydrolyzing] from Klebsiella pneumoniae subsp. pneumoniae (strain ATCC 700721 / MGH 78578).